Here is a 161-residue protein sequence, read N- to C-terminus: MSVVSQVILRADDELRYPSSGELSGIKNFLATGAVRIRIAEALADNEKKIVDQAQKQLFSIHPEYRTSGGNAATTKQYNQCLRDYGWYLRLVTYGILAGDKDPIERIGLIGVKEMYNALGVPVPGMVDAIRCLKDAALGVLDSEEARIAAPYFDFITQAMS.

An N4-methylasparagine modification is found at Asn-71. Residue Cys-81 coordinates (2R,3E)-phycocyanobilin.

Belongs to the phycobiliprotein family. As to quaternary structure, heterodimer of an alpha-B and a beta chain forming AP-B. Contains one covalently linked bilin chromophore. The chromophore is added by phycocyanobilin lyase CpcUS.

It localises to the cellular thylakoid membrane. Functionally, a variant alpha-allophycocyanin (AP) which forms a complex with beta-AP with maximum absorption at approximately 670 nanometers. It is an important phycobilisome terminal emitter involved in energy transfer to photosystem I. In Picosynechococcus sp. (strain ATCC 27264 / PCC 7002 / PR-6) (Agmenellum quadruplicatum), this protein is Allophycocyanin subunit alpha-B (apcD).